The chain runs to 349 residues: Flap endonuclease 1-B (349 aa).

The tract at residues 1–105 (MGIKGLTKLL…GELAKRLARR (105 aa)) is N-domain. D34 contacts Mg(2+). A DNA-binding site is contributed by R71. Residues D87, E159, E161, D180, and D182 each coordinate Mg(2+). An I-domain region spans residues 123–254 (DMEKYSKRTV…QTALKLIRQH (132 aa)). E159 is a binding site for DNA. DNA-binding residues include G232 and D234. D234 provides a ligand contact to Mg(2+).

It belongs to the XPG/RAD2 endonuclease family. FEN1 subfamily. Interacts with PCNA. Three molecules of FEN1 bind to one PCNA trimer with each molecule binding to one PCNA monomer. PCNA stimulates the nuclease activity without altering cleavage specificity. Mg(2+) serves as cofactor. Phosphorylated. Phosphorylation upon DNA damage induces relocalization to the nuclear plasma.

The protein localises to the nucleus. Its subcellular location is the nucleolus. It is found in the nucleoplasm. The protein resides in the mitochondrion. Its function is as follows. Structure-specific nuclease with 5'-flap endonuclease and 5'-3' exonuclease activities involved in DNA replication and repair. During DNA replication, cleaves the 5'-overhanging flap structure that is generated by displacement synthesis when DNA polymerase encounters the 5'-end of a downstream Okazaki fragment. It enters the flap from the 5'-end and then tracks to cleave the flap base, leaving a nick for ligation. Also involved in the long patch base excision repair (LP-BER) pathway, by cleaving within the apurinic/apyrimidinic (AP) site-terminated flap. Acts as a genome stabilization factor that prevents flaps from equilibrating into structures that lead to duplications and deletions. Also possesses 5'-3' exonuclease activity on nicked or gapped double-stranded DNA, and exhibits RNase H activity. Also involved in replication and repair of rDNA and in repairing mitochondrial DNA. The protein is Flap endonuclease 1-B of Physcomitrium patens (Spreading-leaved earth moss).